Reading from the N-terminus, the 191-residue chain is COP9 signalosome complex subunit 8 (191 aa).

The region spanning Met-6–Leu-179 is the PCI domain.

This sequence belongs to the CSN8 family. Component of the CSN complex, probably composed of cops1, cops2, cops3, cops4, cops5, cops6, cops7, cops8 and cops9.

It is found in the cytoplasm. The protein resides in the nucleus. Its function is as follows. Component of the COP9 signalosome complex (CSN), a complex involved in various cellular and developmental processes. The CSN complex is an essential regulator of the ubiquitin (Ubl) conjugation pathway by mediating the deneddylation of the cullin subunits of E3 ligase complexes, leading to modify the Ubl ligase activity. This chain is COP9 signalosome complex subunit 8 (cops8), found in Danio rerio (Zebrafish).